The sequence spans 512 residues: Methionine--tRNA ligase (512 aa).

The 'HIGH' region motif lies at tyrosine 12–histidine 22. Positions lysine 295–serine 299 match the 'KMSKS' region motif. Lysine 298 contacts ATP.

This sequence belongs to the class-I aminoacyl-tRNA synthetase family. MetG type 2B subfamily. In terms of assembly, monomer.

The protein localises to the cytoplasm. It carries out the reaction tRNA(Met) + L-methionine + ATP = L-methionyl-tRNA(Met) + AMP + diphosphate. Functionally, is required not only for elongation of protein synthesis but also for the initiation of all mRNA translation through initiator tRNA(fMet) aminoacylation. In Rickettsia felis (strain ATCC VR-1525 / URRWXCal2) (Rickettsia azadi), this protein is Methionine--tRNA ligase.